The chain runs to 97 residues: Protein SENESCENCE-ASSOCIATED GENE 21, mitochondrial (97 aa).

A mitochondrion-targeting transit peptide spans 1-46 (MARSISNVKIVSAFVSRELSNAIFRRGYAATAAQGSVSSGGRSGAV).

The protein belongs to the LEA type 3 family. Expressed in roots, stems leaves and flowers, but not in seeds. In short days, observed in cotyledons and roots but absent from rosette leaves.

The protein resides in the mitochondrion. Functionally, mediates tolerance to oxidative stresses (e.g. hydrogen peroxide H(2)O(2), diamide, menadione and tert-butyl hydroperoxide) by minimizing the negative effects of oxidation and monitoring photosynthesis during stress. Promotes root development. Prevents premature aging (e.g. senescence and flowering). Involved in resistance against compatible pathogens such as Botrytis cinerea and Pseudomonas syringae pv. tomato. In Arabidopsis thaliana (Mouse-ear cress), this protein is Protein SENESCENCE-ASSOCIATED GENE 21, mitochondrial.